The chain runs to 362 residues: Chorismate synthase (362 aa).

NADP(+) contacts are provided by Arg-48 and Arg-54. FMN is bound by residues 131-133 (RSS), 243-244 (NA), Gly-287, 302-306 (KPTSS), and Arg-328.

The protein belongs to the chorismate synthase family. As to quaternary structure, homotetramer. FMNH2 serves as cofactor.

The enzyme catalyses 5-O-(1-carboxyvinyl)-3-phosphoshikimate = chorismate + phosphate. Its pathway is metabolic intermediate biosynthesis; chorismate biosynthesis; chorismate from D-erythrose 4-phosphate and phosphoenolpyruvate: step 7/7. In terms of biological role, catalyzes the anti-1,4-elimination of the C-3 phosphate and the C-6 proR hydrogen from 5-enolpyruvylshikimate-3-phosphate (EPSP) to yield chorismate, which is the branch point compound that serves as the starting substrate for the three terminal pathways of aromatic amino acid biosynthesis. This reaction introduces a second double bond into the aromatic ring system. This Rhodopseudomonas palustris (strain ATCC BAA-98 / CGA009) protein is Chorismate synthase.